Reading from the N-terminus, the 240-residue chain is Uridylate kinase (240 aa).

12–15 (KLSG) lines the ATP pocket. The interval 20 to 25 (GEQGFG) is involved in allosteric activation by GTP. UMP is bound at residue Gly54. Residues Gly55 and Arg59 each coordinate ATP. Residues Asp74 and 135–142 (TGNPYFST) contribute to the UMP site. ATP-binding residues include Asn163, Tyr169, and Asp172.

The protein belongs to the UMP kinase family. As to quaternary structure, homohexamer.

It localises to the cytoplasm. It carries out the reaction UMP + ATP = UDP + ADP. The protein operates within pyrimidine metabolism; CTP biosynthesis via de novo pathway; UDP from UMP (UMPK route): step 1/1. With respect to regulation, allosterically activated by GTP. Inhibited by UTP. Functionally, catalyzes the reversible phosphorylation of UMP to UDP. The sequence is that of Uridylate kinase from Bacillus anthracis.